Consider the following 131-residue polypeptide: Small ribosomal subunit protein uS8 (131 aa).

This sequence belongs to the universal ribosomal protein uS8 family. As to quaternary structure, part of the 30S ribosomal subunit. Contacts proteins S5 and S12.

In terms of biological role, one of the primary rRNA binding proteins, it binds directly to 16S rRNA central domain where it helps coordinate assembly of the platform of the 30S subunit. The chain is Small ribosomal subunit protein uS8 from Burkholderia ambifaria (strain MC40-6).